The chain runs to 336 residues: Putative ataxin-3 homolog (336 aa).

A Josephin domain is found at 10 to 193 (GGLLYHEVQE…KECPMATEGS (184 aa)). The active-site Nucleophile is the cysteine 23. Histidine 132 functions as the Proton acceptor in the catalytic mechanism. Asparagine 147 is an active-site residue. The UIM domain maps to 244-263 (QEEADLNAAIAASLMDTGGP). The interval 281–336 (IESTSGEMSKDGNLEEQGANKSETSEPNSDNIESASGSNPKQNTTSLEGKESIKED) is disordered. The span at 299 to 327 (ANKSETSEPNSDNIESASGSNPKQNTTSL) shows a compositional bias: polar residues.

Its subcellular location is the nucleus. The enzyme catalyses Thiol-dependent hydrolysis of ester, thioester, amide, peptide and isopeptide bonds formed by the C-terminal Gly of ubiquitin (a 76-residue protein attached to proteins as an intracellular targeting signal).. In terms of biological role, interacts with key regulators of transcription and represses transcription. Acts as a histone-binding protein that regulates transcription. Acts as a deubiquitinating enzyme. The polypeptide is Putative ataxin-3 homolog (Oryza sativa subsp. japonica (Rice)).